The primary structure comprises 375 residues: N-acetyldiaminopimelate deacetylase (375 aa).

D69 is a catalytic residue. The Proton acceptor role is filled by E128.

This sequence belongs to the peptidase M20A family. N-acetyldiaminopimelate deacetylase subfamily.

It carries out the reaction N-acetyl-(2S,6S)-2,6-diaminopimelate + H2O = (2S,6S)-2,6-diaminopimelate + acetate. It participates in amino-acid biosynthesis; L-lysine biosynthesis via DAP pathway; LL-2,6-diaminopimelate from (S)-tetrahydrodipicolinate (acetylase route): step 3/3. In terms of biological role, catalyzes the conversion of N-acetyl-diaminopimelate to diaminopimelate and acetate. This Streptococcus suis (strain 05ZYH33) protein is N-acetyldiaminopimelate deacetylase.